A 202-amino-acid polypeptide reads, in one-letter code: Neuroligin-3 (202 aa).

Topologically, residues 1-202 are extracellular; sequence RYGSPTYFYA…TGTRMQGHSW (202 aa). Cys-15 and Cys-49 are joined by a disulfide. A glycan (N-linked (GlcNAc...) asparagine) is linked at Asn-50. The interval 154-202 is disordered; that stretch reads LRIPPTAPTSPAGPMARPGAPSGQPSHLPTATRMPRGPGTGTRMQGHSW.

It belongs to the type-B carboxylesterase/lipase family. In terms of assembly, homodimer, and heterodimer with NLGN1 and NLGN2. Interacts with neurexins NRXN1, NRXN2 and NRXN3. Interaction with neurexins is mediated by heparan sulfate glycan modification on neurexin. Interacts (via its C-terminus) with DLG4/PSD-95 (via PDZ domain 3).

It localises to the cell membrane. The protein localises to the synapse. In terms of biological role, cell surface protein involved in cell-cell-interactions via its interactions with neurexin family members. Plays a role in synapse function and synaptic signal transmission, and probably mediates its effects by recruiting and clustering other synaptic proteins. May promote the initial formation of synapses, but is not essential for this. May also play a role in glia-glia or glia-neuron interactions in the developing peripheral nervous system. The sequence is that of Neuroligin-3 (NLGN3) from Macaca mulatta (Rhesus macaque).